The sequence spans 158 residues: 18.1 kDa class I heat shock protein (158 aa).

In terms of domain architecture, sHSP spans 44 to 158; the sequence is ENPAFVSTRV…AEVKSIEISG (115 aa).

This sequence belongs to the small heat shock protein (HSP20) family. Forms oligomeric structures.

The protein localises to the cytoplasm. The protein is 18.1 kDa class I heat shock protein (HSP18.1) of Pisum sativum (Garden pea).